Consider the following 277-residue polypeptide: B3 domain-containing protein At3g19184 (277 aa).

The segment at 33–94 (QSLRVSSSSS…LERRPRRSSR (62 aa)) is disordered. Residues 130–221 (FTKPMLQSHV…TFKVYIIRVN (92 aa)) constitute a DNA-binding region (TF-B3). Positions 224 to 250 (ANNDSDGNEVNDDDSDGNEEDRDNDNE) are enriched in acidic residues. The tract at residues 224-277 (ANNDSDGNEVNDDDSDGNEEDRDNDNESNEKQKETVSEGRQLRSSGKRKRRGRK) is disordered. Residues 251-264 (SNEKQKETVSEGRQ) show a composition bias toward basic and acidic residues. Basic residues predominate over residues 268–277 (SGKRKRRGRK).

It localises to the nucleus. The polypeptide is B3 domain-containing protein At3g19184 (Arabidopsis thaliana (Mouse-ear cress)).